We begin with the raw amino-acid sequence, 337 residues long: Dolichyl-phosphate beta-glucosyltransferase ALG5C (337 aa).

At 1–6 (MNDLPP) the chain is on the lumenal side. A helical transmembrane segment spans residues 7–27 (IANLISNILFVLLIITFLYAL). Residues 28–337 (CSRFVSDKTL…ADTPISDFEV (310 aa)) are Cytoplasmic-facing.

It belongs to the glycosyltransferase 2 family.

It localises to the endoplasmic reticulum membrane. It carries out the reaction a di-trans,poly-cis-dolichyl phosphate + UDP-alpha-D-glucose = a di-trans,poly-cis-dolichyl beta-D-glucosyl phosphate + UDP. It functions in the pathway protein modification; protein glycosylation. Its function is as follows. Dolichyl-phosphate beta-glucosyltransferase involved in the glycosylation of glycoproteins through the synthesis of dolichyl beta-D-glucosyl phosphate which serves as a sugar donor for transfer of three glucose residues to the Man-9-GlcNAc-2-PP-dolichol precursor to N-glycans. The sequence is that of Dolichyl-phosphate beta-glucosyltransferase ALG5C from Trichomonas vaginalis (strain ATCC PRA-98 / G3).